The primary structure comprises 217 residues: MANKEEIIAKAKEAITDFDDELAEEVANEALAAGIDPVELIEKGFTAGMEEVGEKFGQGELFLPHVLAAAEAMNSGIKVITPEMEKRKSQTKSLGTVAIGTIEGDIHSIGKDIVASMLNIAGFKVVDLGRDVPINTFVEKVKELKPQVVASSALMTTTMVNQIQIEEQLKEAGVRDQVKTMVGGAPVTQDWADKIGADIYGESANDAVAKVKAALNV.

One can recognise a B12-binding N-terminal domain in the interval 1–92; the sequence is MANKEEIIAK…EMEKRKSQTK (92 aa). A B12-binding domain is found at 94 to 217; sequence LGTVAIGTIE…VAKVKAALNV (124 aa). His-107 serves as a coordination point for methylcob(III)alamin.

This sequence belongs to the methylamine corrinoid protein family. Can form a complex with MttB.

It functions in the pathway one-carbon metabolism; methanogenesis from trimethylamine. Its function is as follows. Acts probably as a methyl group carrier between MttB and either MtbA or MtaA. This chain is Trimethylamine corrinoid protein, found in Methanosarcina barkeri.